A 376-amino-acid polypeptide reads, in one-letter code: DnaJ homolog subfamily B member 12 (376 aa).

Met1 bears the N-acetylmethionine mark. Residues 45–97 (ALIESLNQKPQSTGDHPQPTDTTHTTTKKAGGTETPSANGEAGGGESAKGYTS) form a disordered region. The segment covering 57–84 (TGDHPQPTDTTHTTTKKAGGTETPSANG) has biased composition (low complexity). One can recognise a J domain in the interval 111-175 (DYYEILGVSR…EKRKQYDQFG (65 aa)). His186 carries the pros-methylhistidine modification. A helical transmembrane segment spans residues 243–263 (GGLGVFVQLMPILILILVSAL).

It belongs to the DnaJ family. DNAJB12/DNAJB14 subfamily. In terms of assembly, homodimer and homotetramer. Interacts (via J domain) with HSPA8/Hsc70. Forms a multiprotein complex, at least composed of DNAJB12, DNAJB14, HSPA8/Hsc70 and SGTA; interaction with DNAJB14 and HSPA8/Hsc70 is direct. In terms of processing, methylated at His-186 by METTL9.

It is found in the endoplasmic reticulum membrane. The protein resides in the nucleus membrane. Acts as a co-chaperone with HSPA8/Hsc70; required to promote protein folding and trafficking, prevent aggregation of client proteins, and promote unfolded proteins to endoplasmic reticulum-associated degradation (ERAD) pathway. Acts by determining HSPA8/Hsc70's ATPase and polypeptide-binding activities. Can also act independently of HSPA8/Hsc70: together with DNAJB14, acts as a chaperone that promotes maturation of potassium channels KCND2 and KCNH2 by stabilizing nascent channel subunits and assembling them into tetramers. While stabilization of nascent channel proteins is dependent on HSPA8/Hsc70, the process of oligomerization of channel subunits is independent of HSPA8/Hsc70. When overexpressed, forms membranous structures together with DNAJB14 and HSPA8/Hsc70 within the nucleus; the role of these structures, named DJANGOs, is still unclear. This chain is DnaJ homolog subfamily B member 12, found in Mus musculus (Mouse).